The sequence spans 708 residues: MEANHQRNDLGLVALTMLAQYHNISLNPEEIKHKFDLDGKGLSLTSWLLAAKSLALKAKHIKKEISRLHLVNLPALVWQDNGKHFLLVKVDTDNNRYLTYNLEQDAPQILSQDEFEACYQGQLILVTSRASVVGQLAKFDFTWFIPAVIKYRKIFLETLIVSIFLQIFALITPLFFQVVMDKVLVHRGFSTLNIITVALAIVIIFEIVLSGLRTYVFSHSTSRIDVELGAKLFRHLLSLPISYFENRRVGDTVARVRELDQIRNFLTGQALTSVLDLLFSFIFFAVMWYYSPKLTLVILGSLPCYILWSIFISPILRRRLDDKFARSADNQAFLVESVTAINMIKAMAVAPQMTDTWDKQLASYVSSSFRVTVLATIGQQGVQLIQKTVMVINLWLGAHLVISGDLSIGQLIAFNMLSGQVIAPVIRLAQLWQDFQQVGISVTRLGDVLNSPTEQYQGKLSLPEIKGDISFKNIRFRYKPDAPTILNNVNLEIRQGEVIGIVGRSGSGKSTLTKLLQRFYIPENGQVLIDGHDLALADPNWLRRQIGVVLQDNVLLNRSIRENIALSDPGMPMERVIYAAKLAGAHDFISELREGYNTIVGEQGAGLSGGQRQRIAIARALVNNPKILIFDEATSALDYQSEHIIMQNMQKICQGRTVILIAHRLSTVKNADRIIVMEKGEIVEQGKHHELLQNSNGLYSYLHQLQLN.

Positions methionine 1–valine 126 constitute a Peptidase C39 domain. Residues phenylalanine 155 to glutamine 437 enclose the ABC transmembrane type-1 domain. Helical transmembrane passes span leucine 159–valine 179, leucine 192–leucine 212, alanine 270–tyrosine 290, leucine 296–leucine 316, and valine 389–glycine 409. Residues isoleucine 469–glutamine 704 form the ABC transporter domain. Glycine 503–serine 510 lines the ATP pocket.

Belongs to the ABC transporter superfamily. Protein-1 exporter (TC 3.A.1.109) family. As to quaternary structure, homodimer.

The protein localises to the cell inner membrane. The enzyme catalyses ATP + H2O + proteinSide 1 = ADP + phosphate + proteinSide 2.. Part of the ABC transporter complex LktBD involved in leukotoxin export. Transmembrane domains (TMD) form a pore in the inner membrane and the ATP-binding domain (NBD) is responsible for energy generation. The protein is Leukotoxin translocation ATP-binding protein LktB (lktB) of Mannheimia haemolytica (Pasteurella haemolytica).